The primary structure comprises 337 residues: Cathepsin L-like (337 aa).

The N-terminal stretch at 1-18 (MNRFILLALVAAVVAVNS) is a signal peptide. Positions 19–119 (AKLSRQIESA…SSFLAPFNVQ (101 aa)) are cleaved as a propeptide — activation peptide. A glycan (N-linked (GlcNAc...) asparagine) is linked at N108. Cystine bridges form between C141–C184, C175–C217, and C276–C326. C144 is a catalytic residue. Residues H283 and N304 contribute to the active site.

Belongs to the peptidase C1 family. As to expression, expressed in intestine, pharynx posterior bulb, hypodermis and cuticle (at protein level). Expressed in germ cells, developing oocytes, sheath cells surrounding germ cells and oocytes, and in the eggshell (at protein level).

The protein localises to the secreted. It is found in the cytoplasmic granule. The protein resides in the lysosome. It localises to the endosome. Its subcellular location is the cytoplasmic vesicle. The protein localises to the phagosome. The enzyme catalyses Specificity close to that of papain. As compared to cathepsin B, cathepsin L exhibits higher activity toward protein substrates, but has little activity on Z-Arg-Arg-NHMec, and no peptidyl-dipeptidase activity.. In terms of biological role, cysteine protease which plays an essential role in the degradation of proteins in lysosomes. During early embryogenesis, maternally required for the proteolytic processing of yolk proteins in platelets, a lysosome-like structure where a slow and controlled degradation of yolk proteins occurs. In the gonad, required for the clearance of apoptotic germ cells in the engulfing cell phagolysosomes. In embryos, required for the degradation of endocytic and autophagic cargos. In embryos, may play a role in the degradation of lipid-containing droplets. Required for larval development. In Caenorhabditis elegans, this protein is Cathepsin L-like.